Here is an 869-residue protein sequence, read N- to C-terminus: Valine--tRNA ligase (869 aa).

The 'HIGH' region signature appears at 47–57; that stretch reads PYPTGNFHIGN. The 'KMSKS' region motif lies at 521–525; sequence KMSKS. Lys524 contributes to the ATP binding site.

This sequence belongs to the class-I aminoacyl-tRNA synthetase family. ValS type 2 subfamily.

Its subcellular location is the cytoplasm. It carries out the reaction tRNA(Val) + L-valine + ATP = L-valyl-tRNA(Val) + AMP + diphosphate. Catalyzes the attachment of valine to tRNA(Val). As ValRS can inadvertently accommodate and process structurally similar amino acids such as threonine, to avoid such errors, it has a 'posttransfer' editing activity that hydrolyzes mischarged Thr-tRNA(Val) in a tRNA-dependent manner. In Methanosarcina barkeri (strain Fusaro / DSM 804), this protein is Valine--tRNA ligase.